The chain runs to 367 residues: Apurinic-apyrimidinic endonuclease 1 (367 aa).

Positions 83, 123, 158, 192, 195, 229, 242, 244, and 274 each coordinate Zn(2+). The tract at residues 312-367 (DTLQKLGAKSRKEQLDKFEVKQKKRAGGTKRKKATAEPSDNDILSQMTKKRKTKKE) is disordered. A compositionally biased stretch (basic and acidic residues) spans 321 to 332 (SRKEQLDKFEVK). Residues 333–344 (QKKRAGGTKRKK) are compositionally biased toward basic residues. S356 is modified (phosphoserine).

It belongs to the AP endonuclease 2 family. In terms of assembly, monomer. Requires Zn(2+) as cofactor.

It localises to the nucleus. In terms of biological role, DNA repair enzyme that cleaves apurinic/apyrimidinic (AP) sites and removes 3'-blocking groups present at single strand breaks of damaged DNA. APN1 accounts for &gt; 97% of both apurinic/apyrimidinic (AP) endonuclease and DNA 3'-repair diesterase activities. The sequence is that of Apurinic-apyrimidinic endonuclease 1 (APN1) from Saccharomyces cerevisiae (strain ATCC 204508 / S288c) (Baker's yeast).